The following is a 371-amino-acid chain: MSFRKVNIVILVLAVALFLLVLHHNFLGLSSLLRNEVSDSGIVGLQPVDFIPNAPQRVVDGREEEIPVVIAASEDRLGGAIAAINSIQHNTRSNVIFYIVTLNGTADHLRSWLSSSNLKRIRYKIVNFDTKLLEGKVKEDPDQGESIKPLTFARFYLPILVPRAKKAIYMDDDVIVQGDILALYNTPLKPGHAAAFSEDCDSTSAKVVIRGAGNQYNYIGYLDYKKERIRELSMKASTCSFNPGVFVANLTEWRRQNITNQLEKWMKLNVEEGLYSRTLAGSITTPPLLIVFYQQHSTIDPMWNVRHLGSSAGKRYSPQFVKAAKLLHWNGHFKPWGRTASYTDVWEKWYIPDPTGKFSLIRRHVEISNTK.

The Cytoplasmic segment spans residues 1-7 (MSFRKVN). A helical; Signal-anchor for type II membrane protein membrane pass occupies residues 8–28 (IVILVLAVALFLLVLHHNFLG). Residues 29-371 (LSSLLRNEVS…RRHVEISNTK (343 aa)) lie on the Lumenal side of the membrane. Residues Asn103 and Asn257 are each glycosylated (N-linked (GlcNAc...) asparagine).

Belongs to the glycosyltransferase 8 family.

It is found in the membrane. The protein is Glycosyltransferase 8 domain-containing protein 1 (GLT8D1) of Bos taurus (Bovine).